A 1535-amino-acid chain; its full sequence is Protein artichoke (1535 aa).

The first 19 residues, 1–19 (MMLLPIFLLLCIGINLIRA), serve as a signal peptide directing secretion. LRR repeat units lie at residues 64–87 (KGRIDELVLENNQLPALPGRFFGS), 89–110 (QIVRLMLRHNSIERVSNGWLNE), 112–135 (ENGLVEIFVVEPQLRSIPAESLNG), 136–157 (MINMLAITIQSEELKHLPDFSG), 158–181 (LLSLTYLSVQTGALQELPSHLFRH), 183–206 (PKLQHIHITGGSGLTRLEAGLFDG), 207–230 (LISLKNLDLSHNGLNWIHLRALSR), 231–256 (LPNLVSLKLSHNQISDVGMVGRIVKD), 257–280 (LEHLKKLRLDNNLITVIEDGSFVD), 281–304 (LPNLSELHLNDNRITELQYGAFLR), 306–328 (PQLKTIYLQNNLIRRIHPESLLQ), 331–356 (GSGVEAVHMYNNEIGHVEALRALLDA), 357–380 (LPRLRYLDMSGNLLSELPYGALRG), 382–404 (GTLEQLHLNHNHLRLIERDALMA), 406–429 (PALRELRMRNNSLSSDLPLPFWNL), 430–452 (PGLKGLDLAQNQFARVDSQLLAG), 453–476 (LPSLRRLDLSENGLIELAPNSFRH), 478–500 (PLLETLNISSNELTKIHSSTLIH), 521–545 (LPRIVERISLKGNQITSLPAAASKD), 548–571 (LPNLRMLDLSQNRIEQLPRHGFQG), 573–595 (MELRVLSLAQNELRQLKDTSFIG), 597–619 (QRLELLHLQENQLGEADERALLP), 620–643 (LAELRNLNLQSNKLEAITDNFFSN), 645–667 (SRLEQLDLSRNLIRSISPTAFDT), 669–691 (RSLEYLDLSGNALLDISVGLGNL), 692–714 (NNLRDIDLSYNQISRIQSDVIGG), 716–738 (RNVVEIRLSNNLIVELQQGTFRN), 739–762 (LPKLQYLDLSSNEIRNVEPGALKG), 764–786 (DELQEFVLADNKLVELKDHVFEE), 788–810 (PSLLASHFQYNKLRYISPESFHN), 811–834 (ANSLVFLNLSNNHFRNMENIGLRS), 835–858 (MRNLEVLDLSTNGVKLVSTMPLKA), 860–882 (NWLVELKMDNNQICRIQGSPFET), and 883–906 (MPRLRVLSMRNNQLRSIKERTFRN). The LRRCT domain occupies 919-963 (NPIDCNCEMQWLSVWLQETNFPYPGPKCQDGRLLRSARMERSLCV). Disordered stretches follow at residues 1036-1055 (HSAISTSQRPKPTPTINSNI), 1253-1331 (TQAR…DSQY), 1377-1416 (VTTTTPQSPSDNQVTLAGPTSTVPPPPPASPPLRGGGRST), and 1429-1449 (AQPTAEEYQRTTPSGDNEGVA). Residues 1253-1270 (TQARPKPTKSSGESSETA) are compositionally biased toward polar residues. Low complexity-rich tracts occupy residues 1271–1285 (TYEVTETTPDITTTT) and 1293–1315 (TSTTKASTTTTRSTTTTSTTQVT). 2 stretches are compositionally biased toward polar residues: residues 1316–1328 (PAENNASSSTELD) and 1377–1391 (VTTTTPQSPSDNQVT). The span at 1398-1407 (TVPPPPPASP) shows a compositional bias: pro residues.

Its subcellular location is the secreted. It is found in the extracellular space. It localises to the extracellular matrix. The protein resides in the cytoplasm. Functionally, required for normal morphology and function of ciliated sensory organs. In Drosophila melanogaster (Fruit fly), this protein is Protein artichoke.